The sequence spans 440 residues: Sequestosome-1 (440 aa).

A2 carries the N-acetylalanine modification. The interaction with LCK stretch occupies residues 2 to 50 (ASLTVKAYLLGKEDAAREIRRFSFCCSPEPEAEAEAAAGPGPCERLLSR). Positions 3 to 102 (SLTVKAYLLG…DIFRIYIKEK (100 aa)) constitute a PB1 domain. Residue S24 is modified to Phosphoserine. The interaction with PRKCZ and dimerization stretch occupies residues 43–107 (PCERLLSRVA…YIKEKKECRR (65 aa)). Residues 50–80 (RVAALFPALRPGGFQAHYRDEDGDLVAFSSD) form an interaction with PAWR region. K91 is covalently cross-linked (Glycyl lysine isopeptide (Lys-Gly) (interchain with G-Cter in ubiquitin)). The tract at residues 122–224 (VHPNVICDGC…EARPGPTAES (103 aa)) is interaction with GABRR3. The segment at 123-173 (HPNVICDGCNGPVVGTRYKCSVCPDYDLCSVCEGKGLHRGHTKLAFPSPFG) adopts a ZZ-type zinc-finger fold. Zn(2+)-binding residues include C128, C131, C142, and C145. Y148 carries the post-translational modification Phosphotyrosine. The Zn(2+) site is built by C151, C154, H160, and H163. Phosphoserine is present on residues S170 and S176. Residues 170-220 (SPFGHLSEGFSHSRWLRKVKHGHFGWPGWEMGPPGNWSPRPPRAGEARPGP) form an LIM protein-binding (LB) region. Residue K189 forms a Glycyl lysine isopeptide (Lys-Gly) (interchain with G-Cter in ubiquitin) linkage. The disordered stretch occupies residues 196–235 (PGWEMGPPGNWSPRPPRAGEARPGPTAESASGPSEDPSVN). A phosphoserine mark is found at S207, S233, S249, and S266. A TRAF6-binding motif is present at residues 228–233 (PSEDPS). A disordered region spans residues 264–390 (KRSRLTPVSP…ALYPHLPPEA (127 aa)). T269 carries the post-translational modification Phosphothreonine. Residues 269–440 (TPVSPESSST…IQYSKHPPPL (172 aa)) are interaction with NTRK1. Phosphoserine is present on residues S272 and S282. The segment covering 283-296 (SSQPSSCCSDPSKP) has biased composition (low complexity). S-palmitoyl cysteine attachment occurs at residues C289 and C290. Residue S306 is modified to Phosphoserine. A compositionally biased stretch (basic and acidic residues) spans 310–324 (QMRKIALESEGRPEE). The segment at 321 to 342 (RPEEQMESDNCSGGDDDWTHLS) is MAP1LC3B-binding. 2 positions are modified to phosphoserine: S328 and S332. Residues 336–341 (DDWTHL) carry the LIR motif. A compositionally biased stretch (basic and acidic residues) spans 337-347 (DWTHLSSKEVD). The tract at residues 347–352 (DPSTGE) is interaction with KEAP1. S349 is subject to Phosphoserine; by ULK1. Residues 351 to 373 (GELQSLQMPESEGPSSLDPSQEG) are compositionally biased toward polar residues. S355, S361, S365, and S366 each carry phosphoserine. A UBA domain is found at 389 to 434 (EADPRLIESLSQMLSMGFSDEGGWLTRLLQTKNYDIGAALDTIQYS). A Phosphoserine; by CK2, ULK1 and TBK1 modification is found at S403. Phosphoserine; by ULK1 is present on S407. An N6-acetyllysine; alternate mark is found at K420 and K435. K420 participates in a covalent cross-link: Glycyl lysine isopeptide (Lys-Gly) (interchain with G-Cter in ubiquitin); alternate. K435 is covalently cross-linked (Glycyl lysine isopeptide (Lys-Gly) (interchain with G-Cter in SUMO2); alternate).

As to quaternary structure, homooligomer or heterooligomer; may form homotypic arrays. Dimerization interferes with ubiquitin binding. Component of a ternary complex with PAWR and PRKCZ. Forms a complex with JUB/Ajuba, PRKCZ and TRAF6. Identified in a complex with TRAF6 and CYLD. Identified in a heterotrimeric complex with ubiquitin and ZFAND5, where ZFAND5 and SQSTM1 both interact with the same ubiquitin molecule. Interacts (via LIR motif) with MAP1LC3A and MAP1LC3B, as well as with other ATG8 family members, including GABARAP, GABARAPL1 and GABARAPL2; these interactions are necessary for the recruitment MAP1 LC3 family members to inclusion bodies containing polyubiquitinated protein aggregates and for their degradation by autophagy. Interacts directly with PRKCI and PRKCZ. Interacts with EBI3, LCK, RASA1, NR2F2, NTRK1, NTRK2, NTRK3, NBR1, MAP2K5 and MAPKAPK5. Upon TNF-alpha stimulation, interacts with RIPK1 probably bridging IKBKB to the TNF-R1 complex composed of TNF-R1/TNFRSF1A, TRADD and RIPK1. Interacts with the proteasome subunits PSMD4 and PSMC2. Interacts with TRAF6. Interacts with 'Lys-63'-linked polyubiquitinated MAPT/TAU. Interacts with FHOD3. Interacts with CYLD. Interacts with SESN1. Interacts with SESN2. Interacts with ULK1. Interacts with UBD. Interacts with WDR81; the interaction is direct and regulates the interaction of SQSTM1 with ubiquitinated proteins. Interacts with WDFY3; this interaction is required to recruit WDFY3 to cytoplasmic bodies and to PML bodies. Interacts with LRRC25. Interacts with STING1; leading to relocalization of STING1 to autophagosomes. Interacts (when phosphorylated at Ser-349) with KEAP1; the interaction is direct and inactivates the BCR(KEAP1) complex by sequestering KEAP1 in inclusion bodies, promoting its degradation. Interacts with MOAP1; promoting dissociation of SQSTM1 inclusion bodies that sequester KEAP1. Interacts with GBP1. Interacts with TAX1BP1. Interacts with (ubiquitinated) PEX5; specifically binds PEX5 ubiquitinated at 'Lys-209' in response to reactive oxygen species (ROS). Interacts (via PB1 domain) with TNS2; the interaction leads to sequestration of TNS2 in cytoplasmic aggregates with SQSTM1 and promotes TNS2 ubiquitination and proteasomal degradation. Interacts with IRS1; the interaction is disrupted by the presence of tensin TNS2. Interacts with TRIM5. Interacts with TRIM11 (when ubiquitinated); promoting AIM2 recruitment to autophagosomes and autophagy-dependent degradation of AIM2. Interacts with TRIM13. Interacts with TRIM16. Interacts with TRIM23. Interacts with TRIM50. Interacts with TRIM55. Interacts with ECSIT; this interaction inhibits TLR4 signaling via functional regulation of the TRAF6-ECSIT complex. Interacts with GABRR1, GABRR2 and GABRR3. Interacts with WDR83. Interacts with GRB2. Interacts with USP12; the interaction is independent of USP12 deubiquitinase activity and may be involved in regulation of autophagic flux. Interacts with ASB6. Phosphorylation at Ser-407 by ULK1 destabilizes the UBA dimer interface and increases binding affinity to ubiquitinated proteins. Phosphorylation at Ser-407 also primes for subsequent phosphorylation at Ser-403. Phosphorylation at Ser-403 by CK2 or ULK1 promotes binding to ubiquitinated proteins by increasing the affinity between the UBA domain and polyubiquitin chains. Phosphorylation at Ser-403 by ULK1 is stimulated by SESN2. Phosphorylated at Ser-403 by TBK1, leading to promote relocalization of 'Lys-63'-linked ubiquitinated STING1 to autophagosomes. Phosphorylation at Ser-349 by ULK1 promotes interaction with KEAP1 and inactivation of the BCR(KEAP1) complex, promoting NFE2L2/NRF2 nuclear accumulation and expression of phase II detoxifying enzymes. Phosphorylated in vitro by TTN. Post-translationally, ubiquitinated by UBE2J1 and RNF26 at Lys-435: ubiquitinated SQSTM1 attracts specific vesicle-associated adapters, forming a molecular bridge that restrains cognate vesicles in the perinuclear region and organizes the endosomal pathway for efficient cargo transport. Ubiquitination by UBE2D2 and UBE2D3 increases its ability to bind polyubiquitin chains by destabilizing the UBA dimer interface. Deubiquitination by USP15 releases target vesicles for fast transport into the cell periphery. Ubiquitinated by the BCR(KEAP1) complex at Lys-420, increasing SQSTM1 sequestering activity and promoting its degradation. Ubiquitinated via 'Lys-29' and 'Lys-33'-linked polyubiquitination leading to xenophagic targeting of bacteria and inhibition of their replication. In terms of processing, acetylated at Lys-420 and Lys-435 by KAT5/TIP60, promotes activity by destabilizing the UBA dimer interface and increases binding affinity to ubiquitinated proteins. Deacetylated by HDAC6. Palmitoylation at Cys-289 and Cys-290 by ZDHHC19 is required for efficient autophagic degradation of SQSTM1-cargo complexes by promoting affinity for ATG8 proteins and recruitment of p62 bodies to autophagosomes. Dealmitoylated at Cys-289 and Cys-290 by LYPLA1. Post-translationally, (Microbial infection) Cleaved by S.pyogenes SpeB protease; leading to its degradation. Degradation by SpeB prevents autophagy, promoting to S.pyogenes intracellular replication. In terms of processing, (Microbial infection) Deubiquitinated by Epstein-Barr virus BPLF1; leading to inhibition of the recruitment of MAP1LC3A/LC3 to SQSTM1-positive structures. In terms of tissue distribution, ubiquitously expressed.

Its subcellular location is the cytoplasmic vesicle. The protein localises to the autophagosome. It localises to the preautophagosomal structure. The protein resides in the cytoplasm. It is found in the cytosol. Its subcellular location is the nucleus. The protein localises to the PML body. It localises to the late endosome. The protein resides in the lysosome. It is found in the endoplasmic reticulum. Its subcellular location is the myofibril. The protein localises to the sarcomere. In terms of biological role, molecular adapter required for selective macroautophagy (aggrephagy) by acting as a bridge between polyubiquitinated proteins and autophagosomes. Promotes the recruitment of ubiquitinated cargo proteins to autophagosomes via multiple domains that bridge proteins and organelles in different steps. SQSTM1 first mediates the assembly and removal of ubiquitinated proteins by undergoing liquid-liquid phase separation upon binding to ubiquitinated proteins via its UBA domain, leading to the formation of insoluble cytoplasmic inclusions, known as p62 bodies. SQSTM1 then interacts with ATG8 family proteins on autophagosomes via its LIR motif, leading to p62 body recruitment to autophagosomes, followed by autophagic clearance of ubiquitinated proteins. SQSTM1 is itself degraded along with its ubiquitinated cargos. Also required to recruit ubiquitinated proteins to PML bodies in the nucleus. Also involved in autophagy of peroxisomes (pexophagy) in response to reactive oxygen species (ROS) by acting as a bridge between ubiquitinated PEX5 receptor and autophagosomes. Acts as an activator of the NFE2L2/NRF2 pathway via interaction with KEAP1: interaction inactivates the BCR(KEAP1) complex by sequestering the complex in inclusion bodies, promoting nuclear accumulation of NFE2L2/NRF2 and subsequent expression of cytoprotective genes. Promotes relocalization of 'Lys-63'-linked ubiquitinated STING1 to autophagosomes. Involved in endosome organization by retaining vesicles in the perinuclear cloud: following ubiquitination by RNF26, attracts specific vesicle-associated adapters, forming a molecular bridge that restrains cognate vesicles in the perinuclear region and organizes the endosomal pathway for efficient cargo transport. Sequesters tensin TNS2 into cytoplasmic puncta, promoting TNS2 ubiquitination and proteasomal degradation. May regulate the activation of NFKB1 by TNF-alpha, nerve growth factor (NGF) and interleukin-1. May play a role in titin/TTN downstream signaling in muscle cells. Adapter that mediates the interaction between TRAF6 and CYLD. This Homo sapiens (Human) protein is Sequestosome-1.